Reading from the N-terminus, the 209-residue chain is Guanylate kinase (209 aa).

A Guanylate kinase-like domain is found at Gly-16–Leu-198. Gly-23–Ser-30 contributes to the ATP binding site.

The protein belongs to the guanylate kinase family.

The protein localises to the cytoplasm. It catalyses the reaction GMP + ATP = GDP + ADP. In terms of biological role, essential for recycling GMP and indirectly, cGMP. The sequence is that of Guanylate kinase from Rhodopirellula baltica (strain DSM 10527 / NCIMB 13988 / SH1).